The following is a 156-amino-acid chain: Small ribosomal subunit protein uS7 (156 aa).

This sequence belongs to the universal ribosomal protein uS7 family. As to quaternary structure, part of the 30S ribosomal subunit. Contacts proteins S9 and S11.

One of the primary rRNA binding proteins, it binds directly to 16S rRNA where it nucleates assembly of the head domain of the 30S subunit. Is located at the subunit interface close to the decoding center, probably blocks exit of the E-site tRNA. The protein is Small ribosomal subunit protein uS7 of Lactobacillus delbrueckii subsp. bulgaricus (strain ATCC 11842 / DSM 20081 / BCRC 10696 / JCM 1002 / NBRC 13953 / NCIMB 11778 / NCTC 12712 / WDCM 00102 / Lb 14).